We begin with the raw amino-acid sequence, 186 residues long: Napin embryo-specific (186 aa).

An N-terminal signal peptide occupies residues 1–21 (MANKLFLVSATLALFFLLTNA). 2 consecutive propeptides follow at residues 22-38 (SVYRTVVEVDEDDATNP) and 77-97 (PSWTLDGEFDFEDDVENQQQG).

This sequence belongs to the 2S seed storage albumins family. As to quaternary structure, the mature protein consists of a small and a large chain linked by disulfide bonds. As to expression, cotyledons and the axis.

Its function is as follows. The small, basic, water-soluble napins are one of the two major kinds of storage proteins synthesized in the seed during its maturation. This is Napin embryo-specific from Brassica napus (Rape).